Reading from the N-terminus, the 294-residue chain is Glycine--tRNA ligase alpha subunit (294 aa).

This sequence belongs to the class-II aminoacyl-tRNA synthetase family. In terms of assembly, tetramer of two alpha and two beta subunits.

Its subcellular location is the cytoplasm. The enzyme catalyses tRNA(Gly) + glycine + ATP = glycyl-tRNA(Gly) + AMP + diphosphate. In Natranaerobius thermophilus (strain ATCC BAA-1301 / DSM 18059 / JW/NM-WN-LF), this protein is Glycine--tRNA ligase alpha subunit.